The following is a 292-amino-acid chain: Pantothenate synthetase (292 aa).

30-37 (MGFLHIGH) is an ATP binding site. Histidine 37 (proton donor) is an active-site residue. Position 61 (glutamine 61) interacts with (R)-pantoate. Glutamine 61 is a binding site for beta-alanine. 147-150 (GEKD) provides a ligand contact to ATP. Glutamine 153 serves as a coordination point for (R)-pantoate. ATP contacts are provided by residues valine 176 and 184–187 (CSSR).

The protein belongs to the pantothenate synthetase family. Homodimer.

Its subcellular location is the cytoplasm. It carries out the reaction (R)-pantoate + beta-alanine + ATP = (R)-pantothenate + AMP + diphosphate + H(+). The protein operates within cofactor biosynthesis; (R)-pantothenate biosynthesis; (R)-pantothenate from (R)-pantoate and beta-alanine: step 1/1. In terms of biological role, catalyzes the condensation of pantoate with beta-alanine in an ATP-dependent reaction via a pantoyl-adenylate intermediate. This Agrobacterium fabrum (strain C58 / ATCC 33970) (Agrobacterium tumefaciens (strain C58)) protein is Pantothenate synthetase.